A 339-amino-acid polypeptide reads, in one-letter code: Dihydroorotate dehydrogenase (quinone) (339 aa).

FMN contacts are provided by residues 62–66 (AGMDK) and threonine 86. Lysine 66 serves as a coordination point for substrate. 111-115 (NRMGF) contributes to the substrate binding site. Residues asparagine 139 and asparagine 172 each contribute to the FMN site. Asparagine 172 is a binding site for substrate. Serine 175 functions as the Nucleophile in the catalytic mechanism. Residue asparagine 177 participates in substrate binding. Residues lysine 217 and threonine 245 each coordinate FMN. 246 to 247 (NT) contacts substrate. FMN-binding positions include glycine 268, glycine 297, and 318 to 319 (YS).

The protein belongs to the dihydroorotate dehydrogenase family. Type 2 subfamily. As to quaternary structure, monomer. FMN is required as a cofactor.

It localises to the cell membrane. It carries out the reaction (S)-dihydroorotate + a quinone = orotate + a quinol. It participates in pyrimidine metabolism; UMP biosynthesis via de novo pathway; orotate from (S)-dihydroorotate (quinone route): step 1/1. Catalyzes the conversion of dihydroorotate to orotate with quinone as electron acceptor. In Shewanella sp. (strain MR-4), this protein is Dihydroorotate dehydrogenase (quinone).